A 455-amino-acid chain; its full sequence is MSSFANLFGKSTKVDENIEQLFKNTRDGPVSKDELVKKQRTVIKIPKVTAPKQQTNENESTLNQSANESDEEEEEYNDESNEGDDSDDAEQTEPTSKNDDENENLEAQYFDKLLSEQNEEQDESKESSEAKSSKVAEERTKAKVATTVDLKEKELEKADRTVFVGNVPADVITSKIIAKNFKNLFKHYGKIDSIRYRSISFDEHLPRKVAFAKKNLHKSRDSVNAYIVYKEKPASIAAKELNATVFEDHHLRVDHVSHPAPKDNKRTIFVGNLDFEEKEETLWKYFNSKLDQDVESVRIIRDSKTNLGKGFALVQFKDTLSVNKALLLNDKPLETGTQKKGRKLRISRAKSNAKPSLMSPNHFDNQKKKFAAGKSQQKLNDNQKTKIGRAQSTLGKADRSTVGKAKRIILEGQRATKGEAIKGIKGSKKGKKVKKPRIRERSTKFKEERKTMNKV.

Disordered stretches follow at residues M1–N104 and Q117–A142. Residues N24 to K37 are compositionally biased toward basic and acidic residues. A compositionally biased stretch (polar residues) spans P51–A66. Residues E68 to Q91 are compositionally biased toward acidic residues. A compositionally biased stretch (basic and acidic residues) spans S124–K141. RRM domains are found at residues R160–H258 and R266–S351. Disordered stretches follow at residues L333–V402 and A420–V455. The segment covering K339 to R348 has biased composition (basic residues). Over residues A349 to F363 the composition is skewed to polar residues. The span at K425 to I438 shows a compositional bias: basic residues. The segment covering R439–V455 has biased composition (basic and acidic residues).

The protein belongs to the RRM RBM34 family.

Its subcellular location is the nucleus. The protein localises to the nucleolus. Functionally, involved in pre-25S rRNA processing. The sequence is that of Nucleolar protein 12 (NOP12) from Candida albicans (strain SC5314 / ATCC MYA-2876) (Yeast).